Here is an 89-residue protein sequence, read N- to C-terminus: uncharacterized protein (89 aa).

2 consecutive transmembrane segments (helical) span residues 1-21 and 28-48; these read MFLA…ISLI and GISL…TIAA.

The protein localises to the cell membrane. This is an uncharacterized protein from Methanocaldococcus jannaschii (strain ATCC 43067 / DSM 2661 / JAL-1 / JCM 10045 / NBRC 100440) (Methanococcus jannaschii).